The sequence spans 91 residues: uncharacterized protein (91 aa).

The next 2 helical transmembrane spans lie at 10–30 (VLFTAPGLIVGALAIGAAGGI) and 46–66 (LLVAVLFVGAFTGIMVEQALS). A disordered region spans residues 68–91 (MRRQDGARGTARAGRNSARRRMPS).

The protein localises to the cell membrane. This is an uncharacterized protein from Sinorhizobium fredii (strain NBRC 101917 / NGR234).